A 159-amino-acid polypeptide reads, in one-letter code: UPF0699 transmembrane protein YdbS (159 aa).

2 consecutive transmembrane segments (helical) span residues 22-42 and 47-67; these read IIIS…SYYF and WISG…VFII.

The protein belongs to the UPF0699 family.

It localises to the cell membrane. This Bacillus subtilis (strain 168) protein is UPF0699 transmembrane protein YdbS (ydbS).